The following is a 279-amino-acid chain: Secreted RxLR effector protein 152 (279 aa).

Residues 1 to 22 (MRNGSVLFGLFFIGHSCSVLLA) form the signal peptide. Residues 47–62 (RTLQADDSERTLAEER) carry the RxLR-dEER motif.

This sequence belongs to the RxLR effector family.

The protein localises to the secreted. It localises to the host nucleus. Functionally, secreted effector that completely suppresses the host cell death induced by cell death-inducing proteins. The sequence is that of Secreted RxLR effector protein 152 from Plasmopara viticola (Downy mildew of grapevine).